A 243-amino-acid polypeptide reads, in one-letter code: MSYSLRIADLPEDERPREKLLKYGAKHLGNAELIAILLATGQGKGKLSAVGLGQYILQQLGQNRQDPMDVLRNIHPQELIAFPGIGPAKATTILAAVELGKRVFQSRPLEKMVVDSPEAAAIALSQDLMWQTQEHFAIVMLDVKNRLLATKVITIGTATETLIHPREIFREVIKQGATRLIVAHNHPSGGLEPSPEDIRLTEFLLQGAQYLQIPVLDHLILGHGKHQSLRQCTDLWERFPQGD.

The MPN domain occupies 113-235 (VVDSPEAAAI…HQSLRQCTDL (123 aa)). The Zn(2+) site is built by histidine 184, histidine 186, and aspartate 197. Residues 184–197 (HNHPSGGLEPSPED) carry the JAMM motif motif.

It belongs to the UPF0758 family.

This Synechocystis sp. (strain ATCC 27184 / PCC 6803 / Kazusa) protein is UPF0758 protein sll0766.